We begin with the raw amino-acid sequence, 578 residues long: Arginine--tRNA ligase (578 aa).

The 'HIGH' region signature appears at 127 to 137 (PNLAKEMHVGH).

The protein belongs to the class-I aminoacyl-tRNA synthetase family. Monomer.

The protein localises to the cytoplasm. The catalysed reaction is tRNA(Arg) + L-arginine + ATP = L-arginyl-tRNA(Arg) + AMP + diphosphate. The polypeptide is Arginine--tRNA ligase (Pseudomonas putida (strain GB-1)).